The following is a 342-amino-acid chain: Nuclear hormone receptor family member nhr-150 (342 aa).

Residues 1-71 constitute a DNA-binding region (nuclear receptor); sequence MCQVCGAAEA…AGMTSKKIQS (71 aa). The NR C4-type zinc-finger motif lies at 2–22; the sequence is CQVCGAAEADLHFGGISCRAC. The NR C4-type; degenerate zinc-finger motif lies at 39–54; it reads CTCKTRILDSHPCRSC. The NR LBD domain maps to 94-341; the sequence is SARIIPRSSL…GFMEIIRESK (248 aa).

Belongs to the nuclear hormone receptor family.

The protein resides in the nucleus. In terms of biological role, orphan nuclear receptor. This chain is Nuclear hormone receptor family member nhr-150 (nhr-150), found in Caenorhabditis elegans.